The sequence spans 153 residues: Protein-export protein SecB (153 aa).

The protein belongs to the SecB family. Homotetramer, a dimer of dimers. One homotetramer interacts with 1 SecA dimer.

The protein localises to the cytoplasm. Its function is as follows. One of the proteins required for the normal export of preproteins out of the cell cytoplasm. It is a molecular chaperone that binds to a subset of precursor proteins, maintaining them in a translocation-competent state. It also specifically binds to its receptor SecA. The protein is Protein-export protein SecB of Erwinia tasmaniensis (strain DSM 17950 / CFBP 7177 / CIP 109463 / NCPPB 4357 / Et1/99).